Reading from the N-terminus, the 127-residue chain is Small ribosomal subunit protein uS11 (127 aa).

Belongs to the universal ribosomal protein uS11 family. As to quaternary structure, part of the 30S ribosomal subunit. Interacts with proteins S7 and S18. Binds to IF-3.

Located on the platform of the 30S subunit, it bridges several disparate RNA helices of the 16S rRNA. Forms part of the Shine-Dalgarno cleft in the 70S ribosome. The chain is Small ribosomal subunit protein uS11 from Chlorobium luteolum (strain DSM 273 / BCRC 81028 / 2530) (Pelodictyon luteolum).